The sequence spans 509 residues: Maturase K (509 aa).

Belongs to the intron maturase 2 family. MatK subfamily.

Its subcellular location is the plastid. The protein localises to the chloroplast. Functionally, usually encoded in the trnK tRNA gene intron. Probably assists in splicing its own and other chloroplast group II introns. In Vatairea macrocarpa, this protein is Maturase K.